We begin with the raw amino-acid sequence, 34 residues long: Mu-conotoxin GS (34 aa).

Cystine bridges form between cysteine 2/cysteine 14, cysteine 9/cysteine 19, and cysteine 13/cysteine 27. A 4-hydroxyproline mark is found at proline 10 and proline 11. Glutamate 32 is modified (4-carboxyglutamate).

As to expression, expressed by the venom duct.

It localises to the secreted. In terms of biological role, mu-conotoxins block voltage-gated sodium channels (Nav). No effect was observed upon injections into mice and goldfish (25 ug). In Conus geographus (Geography cone), this protein is Mu-conotoxin GS.